An 80-amino-acid polypeptide reads, in one-letter code: Mu-conotoxin BuIIIC (80 aa).

Positions 1–22 (MMSKLGVLLTICLLLFPLFALP) are cleaved as a signal peptide. Positions 23 to 51 (QDGDQPADRPAERMQDDLSSEQHPLFEKR) are excised as a propeptide. Cystine bridges form between Cys-56-Cys-70, Cys-57-Cys-76, and Cys-66-Cys-77. Residue Cys-77 is modified to Cysteine amide.

Belongs to the conotoxin M superfamily. Expressed by the venom duct.

It localises to the secreted. Mu-conotoxins block voltage-gated sodium channels. Extremely potent inhibitor of Nav1.4/SCN4A (96% inhibition at 1 uM). The inhibition is very slowly reversible. The polypeptide is Mu-conotoxin BuIIIC (Conus bullatus (Bubble cone)).